The chain runs to 252 residues: Transcriptional regulatory protein HptR (252 aa).

Residues 3-118 enclose the Response regulatory domain; it reads KVVICDDERI…QLEVILGRLV (116 aa). A 4-aspartylphosphate modification is found at Asp-55. The HTH araC/xylS-type domain maps to 153-250; it reads NQIVDQIKQS…QMAPSDYCKQ (98 aa). 2 DNA-binding regions (H-T-H motif) span residues 170–191 and 217–240; these read SDLI…KDHV and HYEI…KKYL.

In terms of processing, phosphorylated by HptS.

It localises to the cytoplasm. Member of the two-component regulatory system HptS/HptR that regulates genes involved in hexose phosphate transport system in response to changes in extracellular phosphate sources. Activates uhpT expression to facilitate glucose-6-phosphate/G6P utilization by directly binding to its promoter. Antagonizes CcpA-dependent transcription of a subset of CcpA-regulated genes involved in antibiotic susceptibility. This is Transcriptional regulatory protein HptR (hptR) from Staphylococcus aureus (strain bovine RF122 / ET3-1).